Here is a 422-residue protein sequence, read N- to C-terminus: uncharacterized protein (422 aa).

Positions 1-22 (MIQNNPKSIGSSSNKSARSSGS) are disordered. Residues 7-22 (KSIGSSSNKSARSSGS) show a composition bias toward low complexity.

This is an uncharacterized protein from Acanthamoeba polyphaga mimivirus (APMV).